We begin with the raw amino-acid sequence, 394 residues long: UPF0229 protein RBAM_009260 (394 aa).

The protein belongs to the UPF0229 family.

This Bacillus velezensis (strain DSM 23117 / BGSC 10A6 / LMG 26770 / FZB42) (Bacillus amyloliquefaciens subsp. plantarum) protein is UPF0229 protein RBAM_009260.